The primary structure comprises 97 residues: Co-chaperonin GroES (97 aa).

Belongs to the GroES chaperonin family. As to quaternary structure, heptamer of 7 subunits arranged in a ring. Interacts with the chaperonin GroEL.

It is found in the cytoplasm. Functionally, together with the chaperonin GroEL, plays an essential role in assisting protein folding. The GroEL-GroES system forms a nano-cage that allows encapsulation of the non-native substrate proteins and provides a physical environment optimized to promote and accelerate protein folding. GroES binds to the apical surface of the GroEL ring, thereby capping the opening of the GroEL channel. The polypeptide is Co-chaperonin GroES (Stutzerimonas stutzeri (Pseudomonas stutzeri)).